A 411-amino-acid polypeptide reads, in one-letter code: Acetylornithine aminotransferase (411 aa).

Residues 107 to 108 (GT) and F141 each bind pyridoxal 5'-phosphate. Residue R144 coordinates N(2)-acetyl-L-ornithine. 227 to 230 (DEIQ) is a pyridoxal 5'-phosphate binding site. K256 bears the N6-(pyridoxal phosphate)lysine mark. A N(2)-acetyl-L-ornithine-binding site is contributed by T284. T285 contacts pyridoxal 5'-phosphate.

Belongs to the class-III pyridoxal-phosphate-dependent aminotransferase family. ArgD subfamily. Homodimer. Requires pyridoxal 5'-phosphate as cofactor.

Its subcellular location is the cytoplasm. The catalysed reaction is N(2)-acetyl-L-ornithine + 2-oxoglutarate = N-acetyl-L-glutamate 5-semialdehyde + L-glutamate. The protein operates within amino-acid biosynthesis; L-arginine biosynthesis; N(2)-acetyl-L-ornithine from L-glutamate: step 4/4. The polypeptide is Acetylornithine aminotransferase (Xylella fastidiosa (strain 9a5c)).